Consider the following 378-residue polypeptide: Flagellin E (378 aa).

Coiled coils occupy residues 98-139 (QSAN…KLLN) and 311-339 (MQNR…IKDA).

Belongs to the bacterial flagellin family. In terms of assembly, heteromer of multiple flagellin subunits including FlaA, FlaB, FlaC, FlaD and FlaE.

The protein resides in the secreted. Its subcellular location is the bacterial flagellum. Flagellin is the subunit protein which polymerizes to form the filaments of bacterial flagella. FlaE is not essential for flagellar synthesis and motility. The chain is Flagellin E (flaE) from Vibrio cholerae serotype O1 (strain ATCC 39541 / Classical Ogawa 395 / O395).